Here is a 2485-residue protein sequence, read N- to C-terminus: MEKVHVDIEEDSPFLRALQRSFPQFEVEAKQVTDNDHANARAFSHLASKLIETEVDPSDTILDIGSAPARRMYSKHKYHCICPMRCAEDPDRLYKYATKLKKNCKEITDKELDKKMKELAAVMSDPDLETETMCLHDDESCRYEGQVAVYQDVYAVDGPTSLYHQANKGVRVAYWIGFDTTPFMFKNLAGAYPSYSTNWADETVLTARNIGLCSSDVMERSRRGMSILRKKYLKPSNNVLFSVGSTIYHEKRDLLRSWHLPSVFHLRGKQNYTCRCETIVSCDGYVVKRIAISPGLYGKPSGYAATMHREGFLCCKVTDTLNGERVSFPVCTYVPATLCDQMTGILATDVSADDAQKLLVGLNQRIVVNGRTQRNTNTMKNYLLPVVAQAFARWAKEYKEDQEDERPLGLRDRQLVMGCCWAFRRHKITSIYKRPDTQTIIKVNSDFHSFVLPRIGSNTLEIGLRTRIRKMLEEHKEPSPLITAEDIQEAKCAADEAKEVREAEELRAVLPPLAADVEEPTLEADVDLMLQEAGAGSVETPRGLIKVTSYAGEDKIGSYAVLSPQAVLKSEKLSCIHPLAEQVIVITHSGRKGRYAVEPYHGKVVVPEGHAIPVQDFQALSESATIVYNEREFVNRYLHHIATHGGALNTDEEYYKTVKPSEHDGEYLYDIDRKQCVKKELVTGLGLTGELVDPPFHEFAYESLRTRPAAPYQVPTIGVYGVPGSGKSGIIKSAVTKKDLVVSAKKENCAEIIRDVKRIKGLDVNARTVDSVLLNGCKYPVETLYIDEAFACHAGTLRALIAIIRPKKAVLCGDPKQCGFFNMMCLKVHFNHEICTQVFHKSISRRCTKSVTSVVSTLFYDKRMRTTNPKETKIEIDTTGSTKPKQDDLILTCFRGWVKQLQIDYKGNEVMTAAASQGLTRKGVYAVRYKVNENPLYAPTSEHVNVLLTRTEDRIVWKTLAGDPWIKTLTAKYPGNFTATIEEWQAEHDAIMRHILERPDPTDVFQNKANVCWAKALVPVLKTAGIDMTTEQWNTVDYFETDKAHSAEIVLNQLCVRFFGLDLDSGLFSAPTVPLSIRNNHWDNSPSPNMYGLNKEVVRQLSRRYPQLPRAVTTGRVYDMNTGTLRNYDPRINLVPVNRRLPHALVLHHNEHPQSDFSSFVSKLKGRTVLVVGEKLSVPGKTVDWLSDRPEATFRARLDLGIPGDVPKYDIIFINVRTPYKYHHYQQCEDHAIKLSMLTKKACLHLNPGGTCVSIGYGYADRASESIIGAIARQFKFSRVCKPKSSLEETEVLFVFIGYDRKARTHNPYKLSSTLTNIYTGSRLHEAGCAPSYHVVRGDIATATEGVIINAANSKGQPGGGVCGALYKKFPESFDLQPIEVGKARLVKGAAKHIIHAVGPNFNKVSEIEGDKQLAEAYESIAKIVNDNNYKSVAIPLLSTGIFSGNKDRLTQSLNHLLTALDTTDADVAIYCRDKKWEMTLKEAVARREAVEEICISDDSSVTEPDAELVRVHPKSSLAGRKGYSTSDGKTFSYLEGTKFHQAAKDIAEINAMWPVATEANEQVCMYILGESMSSIRSKCPVEESEASTPPSTLPCLCIHAMTPERVQRLKASRPEQITVCSSFPLPKYRITGVQKIQCSQPILFSPKVPAYIHPRKYLVETPTVEENQSTEGTPEQPTLITVGETRTRTPEPIIIEEEEDSISLLSDGPTHQVLQVEADIHGPPSASSSSWSIPHASDFDVDSLSILDTLEGASVTSEEASVETNSHFARSMEFLARPVPAPRTVFRNPPQPAPRTRTPSLAPSRASSRISLVSNPPGVNRVITREELEALTPSRAPSRSVSRTSLVSNPPGVNRVITREEFEAFVAQQQXRFDAGAYIFSSDTGQGHLQQKSVRQTVLSEVVLERTELEISYAPRLDQEKEELLRKKLQLNPTPANRSRYQSRRVENMKAITARRILQGLGHYLKAEGKVECYRTLHPVPLYSSSVNRAFSSPKVAVEACNAMLKENFPTVASYCIIPEYDAYLDMVDGASCCLDTASFCPAKLRSFPKKHSYLEPTIRSAVPSAIQNTLQNVLAAATKRNCNVTQMRELPVLDSAAFNVECFKKYACNNEYWETFKENPIRLTEENVVNYITKLKGPKAAALFAKTHNLNMLQDIPMDRFVMDLKRDVKVTPGTKHTEERPKVQVIQAADPLATAYLCGIHRELVRRLNAVLLPNIHTLFDMSAEDFDAIIAEHFQPGDCVLETDIASFDKSEDDAMALTALMILEDLGVDAELLTLIEAAFGEISSIHLPTKTKFKFGAMMKSGMFLTLFVNTVINIVIASRVLRERLTGSPCAAFIGDDNIVKGVKSDKLMADRCATWLNMEVKIIDAVVGEKAPYFCGGFILCDSVTGTACRVADPLKRLFKLGKPLAADDEHDDDRRRALHEESTRWNRVGILPELCKAVESRYETVGTSIIVMAMTTLASSVKSFSYLRGAPITLYG.

The 232-residue stretch at 28–259 folds into the Alphavirus-like MT domain; it reads EAKQVTDNDH…EKRDLLRSWH (232 aa). Residues 244–263 are nsP1 membrane-binding; the sequence is GSTIYHEKRDLLRSWHLPSV. A lipid anchor (S-palmitoyl cysteine; by host) is attached at C419. The (+)RNA virus helicase ATP-binding domain occupies 690 to 841; it reads ELVDPPFHEF…HEICTQVFHK (152 aa). 721–728 lines the a ribonucleoside 5'-triphosphate pocket; the sequence is GVPGSGKS. One can recognise a (+)RNA virus helicase C-terminal domain in the interval 842–990; the sequence is SISRRCTKSV…IEEWQAEHDA (149 aa). The region spanning 1003-1322 is the Peptidase C9 domain; it reads DVFQNKANVC…STLTNIYTGS (320 aa). The nucleolus localization signal stretch occupies residues 1004 to 1023; that stretch reads VFQNKANVCWAKALVPVLKT. C1012 serves as the catalytic For cysteine protease nsP2 activity. The Nuclear export signal signature appears at 1056–1065; it reads VRFFGLDLDS. The active-site For cysteine protease nsP2 activity is the H1081. The Nuclear localization signal signature appears at 1179–1183; the sequence is PGKTV. The region spanning 1328-1489 is the Macro domain; it reads GCAPSYHVVR…TLKEAVARRE (162 aa). Residues D1339, N1353, G1361, G1441, I1442, and F1443 each contribute to the ADP-D-ribose site. Residues C1596, C1598, C1621, and C1639 each coordinate Zn(2+). Residues 1783 to 1810 are disordered; the sequence is PRTVFRNPPQPAPRTRTPSLAPSRASSR. Polar residues predominate over residues 1798-1810; sequence RTPSLAPSRASSR. 2 consecutive repeat copies span residues 1810–1831 and 1844–1865. Residues 1810-1865 are 2 X 21 AA approximate repeats, binding to host FXR family members; it reads RISLVSNPPGVNRVITREELEALTPSRAPSRSVSRTSLVSNPPGVNRVITREEFEA. A RdRp catalytic domain is found at 2242-2357; the sequence is DCVLETDIAS…KGVKSDKLMA (116 aa).

As to quaternary structure, interacts with non-structural protein 3. Interacts with RNA-directed RNA polymerase nsP4. Interacts with protease nsP2. interacts with itself. Interacts with mRNA-capping enzyme nsP1. Interacts with host DDX1. Interacts with host DDX3. Interacts (via C-terminus) with host FXR1; this interaction inhibits the formation of host stress granules on viral mRNAs and the nsp3-FXR1 complexes bind viral RNAs and probably orchestrate the assembly of viral replication complexes. Interacts (via C-terminus) with host FXR2; this interaction inhibits the formation of host stress granules on viral mRNAs and the nsp3-FXR2 complexes bind viral RNAs and probably orchestrate the assembly of viral replication complexes. Interacts (via C-terminus) with host FMR1; this interaction inhibits the formation of host stress granules on viral mRNAs and the nsp3-FMR1 complexes bind viral RNAs and probably orchestrate the assembly of viral replication complexes. In terms of assembly, interacts with mRNA-capping enzyme nsP1. Interacts with protease nsP2. interacts with itself. As to quaternary structure, interacts with RNA-directed RNA polymerase nsP4. Interacts with mRNA-capping enzyme nsP1. Interacts with KPNA1/karyopherin-alpha1; this interaction probably allows the active transport of protease nsP2 into the host nucleus. Requires Mg(2+) as cofactor. It depends on Mn(2+) as a cofactor. In terms of processing, specific enzymatic cleavages in vivo yield mature proteins. The processing of the polyprotein is temporally regulated. In early stages (1.7 hpi), P1234 is first cleaved in trans through its nsP2 protease activity, releasing P123' and nsP4, which associate to form the early replication complex. At the same time, P1234 is also cut at the nsP1/nsP2 site early in infection but with lower efficiency. After replication of the viral minus-strand RNAs (4 hpi), the polyproteins are cut at the nsP1/nsP2 and nsP2/nsP3 sites very efficiently, preventing accumulation of P123' and P1234 and allowing the formation of the late replication complex. NsP3'/nsP4 site is not cleaved anymore and P34 is produced rather than nsP4. Specific enzymatic cleavages in vivo yield mature proteins. The processing of the polyprotein is temporally regulated. In early stages (1.7 hpi), P123 is cleaved at the nsP1/nsP2 site with low efficiency. After replication of the viral minus-strand RNAs (4 hpi), the polyproteins are cut at the nsP1/nsP2 and nsP2/nsP3 sites very efficiently, preventing accumulation of P123 and allowing the formation of the late replication complex. Post-translationally, specific enzymatic cleavages in vivo yield mature proteins. The processing of the polyprotein is temporally regulated. In early stages (1.7 hpi), P123' is cleaved at the nsP1/nsP2 site with low efficiency. After replication of the viral minus-strand RNAs (4 hpi), the polyproteins are cut at the nsP1/nsP2 and nsP2/nsP3 sites very efficiently, preventing accumulation of P123' and allowing the formation of the late replication complex. In terms of processing, palmitoylated by host palmitoyltransferases ZDHHC2 and ZDHHC19. Phosphorylated by host on serines and threonines. Post-translationally, ubiquitinated; targets the protein for rapid degradation via the ubiquitin system. Nsp4 is present in extremely low quantities due to low frequency of translation through the amber stop-codon and the degradation by the ubiquitin pathway.

It is found in the host cytoplasmic vesicle membrane. The protein resides in the host cell membrane. Its subcellular location is the host cell projection. The protein localises to the host filopodium. It localises to the host nucleus. It is found in the host cytoplasm. The catalysed reaction is GTP + S-adenosyl-L-methionine = N(7)-methyl-GTP + S-adenosyl-L-homocysteine. It carries out the reaction N(7)-methyl-GTP + L-histidyl-[protein] = N(tele)-(N(7)-methylguanosine 5'-phospho)-L-histidyl-[protein] + diphosphate. It catalyses the reaction N(tele)-(N(7)-methylguanosine 5'-phospho)-L-histidyl-[protein] + a 5'-end diphospho-(purine-ribonucleoside) in mRNA + H(+) = a 5'-end (N(7)-methyl 5'-triphosphoguanosine)-(purine-ribonucleoside) in mRNA + L-histidyl-[protein]. The enzyme catalyses a 5'-end triphospho-ribonucleoside in mRNA + H2O = a 5'-end diphospho-ribonucleoside in mRNA + phosphate + H(+). The catalysed reaction is a ribonucleoside 5'-triphosphate + H2O = a ribonucleoside 5'-diphosphate + phosphate + H(+). It carries out the reaction ATP + H2O = ADP + phosphate + H(+). It catalyses the reaction RNA(n) + a ribonucleoside 5'-triphosphate = RNA(n+1) + diphosphate. The enzyme catalyses 4-O-(ADP-D-ribosyl)-L-aspartyl-[protein] + H2O = L-aspartyl-[protein] + ADP-D-ribose + H(+). The catalysed reaction is 5-O-(ADP-D-ribosyl)-L-glutamyl-[protein] + H2O = L-glutamyl-[protein] + ADP-D-ribose + H(+). It carries out the reaction RNA(n) + ATP = RNA(n)-3'-adenine ribonucleotide + diphosphate. It catalyses the reaction ADP-alpha-D-ribose 1''-phosphate + H2O = ADP-D-ribose + phosphate. With respect to regulation, inhibited by sinefungin. In terms of biological role, inactive precursor of the viral replicase, which is activated by cleavages carried out by the viral protease nsP2. The early replication complex formed by the polyprotein P123 and nsP4 synthesizes the minus-strand RNAs (antigenome). Polyprotein P123 is a short-lived polyprotein that accumulates during early stage of infection. As soon P123 is cleaved into mature proteins, the plus-strand RNAs synthesis begins. Its function is as follows. The early replication complex formed by the polyprotein P123' and nsP4 synthesizes minus-strand RNAs (antigenome). Polyprotein P123' is a short-lived polyprotein that accumulates during early stage of infection. As soon P123' is cleaved into mature proteins, the plus-strand RNAs synthesis begins. Functionally, cytoplasmic capping enzyme that catalyzes two virus-specific reactions: methyltransferase and nsP1 guanylyltransferase. mRNA-capping is necessary since all viral RNAs are synthesized in the cytoplasm, and host capping enzymes are restricted to the nucleus. The enzymatic reaction involves a covalent link between 7-methyl-GMP and nsP1, whereas eukaryotic capping enzymes form a covalent complex only with GMP. NsP1 capping consists in the following reactions: GTP is first methylated into 7-methyl-GMP and then is covalently linked to nsP1 to form the m7GMp-nsP1 complex from which 7-methyl-GMP complex is transferred to the mRNA to create the cap structure. NsP1 is also needed for the initiation of the minus-strand RNAs synthesis. Probably serves as a membrane anchor for the replication complex composed of nsP1-nsP4. Nsp1 is needed for the initiation of the minus-strand RNAs synthesis. Palmitoylated nsP1 is remodeling host cell cytoskeleton, and induces filopodium-like structure formation at the surface of the host cell. In terms of biological role, multifunctional protein whose N-terminus is part of the RNA polymerase complex and displays NTPase, RNA triphosphatase and helicase activities. NTPase and RNA triphosphatase are involved in viral RNA capping and helicase keeps a check on the dsRNA replication intermediates. The C-terminus harbors a protease that specifically cleaves the polyproteins and releases the mature proteins. Required for the shutoff of minus-strand RNAs synthesis. Inhibits host translation to ensure maximal viral gene expression and evade host immune response. Seems to be essential for minus-strand RNAs and subgenomic 26S mRNAs synthesis. Displays mono-ADP-ribosylhydrolase activity. ADP-ribosylation is a post-translational modification that controls various processes of the host cell and the virus probably needs to revert it for optimal viral replication. Binds proteins of FXR family and sequesters them into the viral RNA replication complexes thereby inhibiting the formation of host stress granules on viral mRNAs. The nsp3-FXR complexes bind viral RNAs and probably orchestrate the assembly of viral replication complexes, thanks to the ability of FXR family members to self-assemble and bind DNA. Its function is as follows. Seems to be essential for minus-strand RNAs and subgenomic 26S mRNAs synthesis. Displays mono-ADP-ribosylhydrolase activity. ADP-ribosylation is a post-translational modification that controls various processes of the host cell and the virus probably needs to revert it for optimal viral replication. Binds proteins of FXR family and sequesters them into the viral RNA replication complexes thereby inhibiting the formation of host stress granules on viral mRNAs. The nsp3'-FXR complexes bind viral RNAs and probably orchestrate the assembly of viral replication complexes, thanks to the ability of FXR family members to self-assemble and bind DNA. Functionally, RNA dependent RNA polymerase. Replicates genomic and antigenomic RNA by recognizing replications specific signals. The early replication complex formed by the polyprotein P123 and nsP4 synthesizes minus-strand RNAs. The late replication complex composed of fully processed nsP1-nsP4 is responsible for the production of genomic and subgenomic plus-strand RNAs. This chain is Polyprotein P1234, found in Venezuelan equine encephalitis virus (strain 3880) (VEEV).